The chain runs to 396 residues: Non-homologous end joining protein Ku (396 aa).

The Ku domain occupies 9 to 189 (ISFGLVSIPV…DVAVRPQELS (181 aa)). Positions 278–288 (DGDAGPAAAGV) are enriched in low complexity. A disordered region spans residues 278-396 (DGDAGPAAAG…SKTPPTRRSA (119 aa)). The span at 294–312 (DDKASDDKASDDKASDGRR) shows a compositional bias: basic and acidic residues. A compositionally biased stretch (polar residues) spans 315-336 (RTSSVKGASSAPGTRSTARKTP). A compositionally biased stretch (low complexity) spans 337–396 (SSTRSTAKTNAATKTPPAKTSAAKASAAKTSAAKATSSRTAPKTAPRTPTSKTPPTRRSA).

This sequence belongs to the prokaryotic Ku family. Homodimer. Interacts with LigD.

Its function is as follows. With LigD forms a non-homologous end joining (NHEJ) DNA repair enzyme, which repairs dsDNA breaks with reduced fidelity. Binds linear dsDNA with 5'- and 3'- overhangs but not closed circular dsDNA nor ssDNA. Recruits and stimulates the ligase activity of LigD. The chain is Non-homologous end joining protein Ku from Frankia casuarinae (strain DSM 45818 / CECT 9043 / HFP020203 / CcI3).